A 360-amino-acid polypeptide reads, in one-letter code: DNA replication and repair protein RecF (360 aa).

33 to 40 serves as a coordination point for ATP; the sequence is GENGSGKT.

It belongs to the RecF family.

The protein localises to the cytoplasm. Its function is as follows. The RecF protein is involved in DNA metabolism; it is required for DNA replication and normal SOS inducibility. RecF binds preferentially to single-stranded, linear DNA. It also seems to bind ATP. In Rickettsia peacockii (strain Rustic), this protein is DNA replication and repair protein RecF.